The sequence spans 377 residues: MSELDYYQVLGVSRTASQEEIKRAYRKLVLKYHPDHNPGDKNAEQKIKNINEAYDILKDEKKRSAYDQLGHQTFKNSGGGNYQQHHGFTGGIDPNDIFENIFGDFMGARRSSKTAFSKKAGANLKYDISLTLEEAFYGVTKIISFKTALTCEACTGKGSLDNNSTSSCPTCRGSGVTRSQQGFFFFENTCQTCRGAGHVIKNPCTKCYGEGRYINTRNLEVKIPAGVKEGSRIKLTGEGEAGSRGGKTGDLYVCITLIPHNTFSVDGNDLHCQLDINCTTAALGGEVEVTDITGSKLKLKIPAGTQNNHKLKLSGKGMQILHSDRCGNMIVHVNIKVPKSLTKSQRELMIKLDKELNEASEEGFLSKVRNFWTSGSE.

The region spanning 5 to 70 (DYYQVLGVSR…KKRSAYDQLG (66 aa)) is the J domain. The CR-type zinc-finger motif lies at 138-216 (GVTKIISFKT…CYGEGRYINT (79 aa)). Residues C151, C154, C168, C171, C190, C193, C204, and C207 each contribute to the Zn(2+) site. CXXCXGXG motif repeat units lie at residues 151-158 (CEACTGKG), 168-175 (CPTCRGSG), 190-197 (CQTCRGAG), and 204-211 (CTKCYGEG).

This sequence belongs to the DnaJ family. In terms of assembly, homodimer. Zn(2+) is required as a cofactor.

The protein resides in the cytoplasm. Participates actively in the response to hyperosmotic and heat shock by preventing the aggregation of stress-denatured proteins and by disaggregating proteins, also in an autonomous, DnaK-independent fashion. Unfolded proteins bind initially to DnaJ; upon interaction with the DnaJ-bound protein, DnaK hydrolyzes its bound ATP, resulting in the formation of a stable complex. GrpE releases ADP from DnaK; ATP binding to DnaK triggers the release of the substrate protein, thus completing the reaction cycle. Several rounds of ATP-dependent interactions between DnaJ, DnaK and GrpE are required for fully efficient folding. Also involved, together with DnaK and GrpE, in the DNA replication of plasmids through activation of initiation proteins. The protein is Chaperone protein DnaJ of Orientia tsutsugamushi (strain Ikeda) (Rickettsia tsutsugamushi).